We begin with the raw amino-acid sequence, 266 residues long: MAVGKNKGLSKGGKKGLKKKIVDPFTRKDWYDIKAPSMFTTRQVGKTLVNRTQGTKIASEGLKGRVVEVSLADLQSDADAERSFRKFRLIVEDVQNRSVLCNFHGMDLTTDKLRSMVKKWQTLIEAHVDVKTTDGYLLRIFCIGFTQKDQMSTRKTSYAQHSQVRNIRRKMVSIVTDEITKCDLKGVVTKLVPDAIAKDIEKACQGIYPLHDVYIRKVKVLKKPRFELSKLLELHGDGGSKTGEVGETGSKVDRPEGYEPPVQETV.

A disordered region spans residues 237–266; the sequence is DGGSKTGEVGETGSKVDRPEGYEPPVQETV.

This sequence belongs to the eukaryotic ribosomal protein eS1 family. In terms of assembly, component of the small ribosomal subunit. Mature ribosomes consist of a small (40S) and a large (60S) subunit. The 40S subunit contains about 33 different proteins and 1 molecule of RNA (18S). The 60S subunit contains about 49 different proteins and 3 molecules of RNA (28S, 5.8S and 5S).

It localises to the cytoplasm. The polypeptide is Small ribosomal subunit protein eS1 (Lysiphlebus testaceipes (Greenbugs aphid parastoid)).